The following is a 299-amino-acid chain: Circadian clock oscillator protein KaiA (299 aa).

Residues 1-169 (MVSKLSLYLV…RLAEKLRERL (169 aa)) enclose the KaiA N-terminal domain. Residues 3–135 (SKLSLYLVTP…LHLAPSCALS (133 aa)) form a psR domain, binds oxidized quinones region. Residues 170 to 178 (GYLGVYYKR) are flexible linker. One can recognise a KaiA C-terminal domain in the interval 179–287 (NPKYFYRSLS…CEMYRRSIPR (109 aa)).

Homodimer. The KaiABC complex composition changes during the circadian cycle to control KaiC phosphorylation. Complexes KaiC(6), KaiA(2-4):KaiC(6), KaiB(6):KaiC(6) and KaiC(6):KaiB(6):KaiA(12) are among the most important forms, many form cooperatively. KaiA and CikA bind to the same region of the KaiB(fs) form and therefore compete.

In terms of biological role, key component of the KaiABC oscillator complex, which constitutes the main circadian regulator in cyanobacteria. Complex composition changes during the circadian cycle to control KaiC phosphorylation. KaiA stimulates KaiC autophosphorylation, while KaiB sequesters KaiA, leading to KaiC autodephosphorylation. KaiA binding to the KaiC CII domain during the subjective day yields KaiA(2-4):KaiC(6) complexes which stimulate KaiC autophosphorylation. Phospho-Ser-431 KaiC accumulation triggers binding of KaiB during the subjective night to form the KaiB(6):KaiC(6) complex, leading to changes in the output regulators CikA and SasA. KaiB(6):KaiC(6) formation exposes a site for KaiA binding on KaiB that sequesters KaiA from KaiC's CII domain, making the KaiC(6):KaiB(6):KaiA(12) complex resulting in KaiC autodephosphorylation. Complete dephosphorylation of KaiC leads to dissociation of KaiA(2):KaiB(1), completing 1 cycle of the Kai oscillator. Its function is as follows. Binds oxidized quinones via the N-terminal PsR domain, allowing it to sense redox changes and possibly mediate clock input. The sequence is that of Circadian clock oscillator protein KaiA from Picosynechococcus sp. (strain ATCC 27264 / PCC 7002 / PR-6) (Agmenellum quadruplicatum).